A 222-amino-acid chain; its full sequence is Superoxide dismutase [Mn], mitochondrial (222 aa).

The N-terminal 24 residues, 1 to 24 (MLSRAVCGTSRQLAPVLGYLGSRQ), are a transit peptide targeting the mitochondrion. H50 is a binding site for Mn(2+). Residue Y58 is modified to 3'-nitrotyrosine. An N6-acetyllysine; alternate mark is found at K68 and K75. N6-succinyllysine; alternate is present on residues K68 and K75. H98 is a Mn(2+) binding site. K114 bears the N6-acetyllysine mark. 2 positions are modified to N6-acetyllysine; alternate: K122 and K130. 2 positions are modified to N6-succinyllysine; alternate: K122 and K130. Mn(2+)-binding residues include D183 and H187. An N6-acetyllysine modification is found at K202.

It belongs to the iron/manganese superoxide dismutase family. Homotetramer. Mn(2+) is required as a cofactor. Nitrated under oxidative stress. Nitration coupled with oxidation inhibits the catalytic activity. In terms of processing, acetylation at Lys-122 decreases enzymatic activity. Deacetylated by SIRT3 upon exposure to ionizing radiations or after long fasting. Post-translationally, polyubiquitinated; leading to proteasomal degradation. Deubiquitinated by USP36 which increases protein stability.

The protein localises to the mitochondrion matrix. The enzyme catalyses 2 superoxide + 2 H(+) = H2O2 + O2. Functionally, destroys superoxide anion radicals which are normally produced within the cells and which are toxic to biological systems. This is Superoxide dismutase [Mn], mitochondrial (SOD2) from Homo sapiens (Human).